A 155-amino-acid polypeptide reads, in one-letter code: Regulatory protein RecX (155 aa).

This sequence belongs to the RecX family.

It is found in the cytoplasm. Its function is as follows. Modulates RecA activity. This Pseudomonas fluorescens (strain ATCC BAA-477 / NRRL B-23932 / Pf-5) protein is Regulatory protein RecX.